A 149-amino-acid polypeptide reads, in one-letter code: Protein E4.1 (149 aa).

This Snake adenovirus serotype 1 (SnAdV-1) protein is Protein E4.1.